A 218-amino-acid chain; its full sequence is Thiamine-phosphate synthase (218 aa).

Residues 46–50 (QFRDK) and aspartate 83 contribute to the 4-amino-2-methyl-5-(diphosphooxymethyl)pyrimidine site. Mg(2+)-binding residues include aspartate 84 and aspartate 103. Serine 122 lines the 4-amino-2-methyl-5-(diphosphooxymethyl)pyrimidine pocket. 2-[(2R,5Z)-2-carboxy-4-methylthiazol-5(2H)-ylidene]ethyl phosphate is bound at residue 149 to 151 (TNS). A 4-amino-2-methyl-5-(diphosphooxymethyl)pyrimidine-binding site is contributed by lysine 152. 2-[(2R,5Z)-2-carboxy-4-methylthiazol-5(2H)-ylidene]ethyl phosphate-binding positions include glycine 181 and 201–202 (IT).

Belongs to the thiamine-phosphate synthase family. Mg(2+) serves as cofactor.

It catalyses the reaction 2-[(2R,5Z)-2-carboxy-4-methylthiazol-5(2H)-ylidene]ethyl phosphate + 4-amino-2-methyl-5-(diphosphooxymethyl)pyrimidine + 2 H(+) = thiamine phosphate + CO2 + diphosphate. The catalysed reaction is 2-(2-carboxy-4-methylthiazol-5-yl)ethyl phosphate + 4-amino-2-methyl-5-(diphosphooxymethyl)pyrimidine + 2 H(+) = thiamine phosphate + CO2 + diphosphate. It carries out the reaction 4-methyl-5-(2-phosphooxyethyl)-thiazole + 4-amino-2-methyl-5-(diphosphooxymethyl)pyrimidine + H(+) = thiamine phosphate + diphosphate. It functions in the pathway cofactor biosynthesis; thiamine diphosphate biosynthesis; thiamine phosphate from 4-amino-2-methyl-5-diphosphomethylpyrimidine and 4-methyl-5-(2-phosphoethyl)-thiazole: step 1/1. Condenses 4-methyl-5-(beta-hydroxyethyl)thiazole monophosphate (THZ-P) and 2-methyl-4-amino-5-hydroxymethyl pyrimidine pyrophosphate (HMP-PP) to form thiamine monophosphate (TMP). The chain is Thiamine-phosphate synthase from Actinobacillus pleuropneumoniae serotype 7 (strain AP76).